A 159-amino-acid chain; its full sequence is Phosphopantetheine adenylyltransferase (159 aa).

Histidine 16 contacts ATP. Residues lysine 40, methionine 72, and arginine 86 each contribute to the substrate site. Residues glycine 87–arginine 89, glutamate 97, and tyrosine 122–serine 128 contribute to the ATP site.

It belongs to the bacterial CoaD family. Homohexamer. The cofactor is Mg(2+).

The protein resides in the cytoplasm. It catalyses the reaction (R)-4'-phosphopantetheine + ATP + H(+) = 3'-dephospho-CoA + diphosphate. It functions in the pathway cofactor biosynthesis; coenzyme A biosynthesis; CoA from (R)-pantothenate: step 4/5. Its function is as follows. Reversibly transfers an adenylyl group from ATP to 4'-phosphopantetheine, yielding dephospho-CoA (dPCoA) and pyrophosphate. This chain is Phosphopantetheine adenylyltransferase, found in Dehalococcoides mccartyi (strain CBDB1).